An 842-amino-acid chain; its full sequence is Envelope glycoprotein gp160 (842 aa).

A signal peptide spans 1–23 (MGMKSGWLLFYLLVSLIKVIGSE). At 24–663 (QHWVTVYYGV…ITKWLWYIKI (640 aa)) the chain is on the extracellular side. Cys-45 and Cys-65 are joined by a disulfide. 19 N-linked (GlcNAc...) asparagine; by host glycosylation sites follow: Asn-79, Asn-123, Asn-131, Asn-134, Asn-149, Asn-153, Asn-181, Asn-190, Asn-225, Asn-229, Asn-234, Asn-255, Asn-267, Asn-278, Asn-284, Asn-290, Asn-320, Asn-331, and Asn-345. Disulfide bonds link Cys-110/Cys-198, Cys-117/Cys-189, Cys-122/Cys-150, Cys-211/Cys-240, and Cys-221/Cys-232. A V1 region spans residues 122 to 149 (CNDSYGEERNNTNMTTREPDIGYKQMKN). The segment at 150–189 (CSFNATTELTDKKKQVYSLFYVEDVVPINAYNKTYRLINC) is V2. A V3 region spans residues 285–318 (CTRPGNNTGGQVQIGPAMTFYNIEKIVGDIRQAY). An intrachain disulfide couples Cys-285 to Cys-319. Positions 353–363 (RNEGDLEVTHL) are CD4-binding loop. Intrachain disulfides connect Cys-367–Cys-423 and Cys-374–Cys-396. The V4 stretch occupies residues 374 to 396 (CNTSKLFNEELLNETGEPITLPC). N-linked (GlcNAc...) asparagine; by host glycosylation is found at Asn-375, Asn-386, Asn-422, and Asn-426. V5 regions lie at residues 439–448 (DTKETIVYPS) and 441–448 (KETIVYPS). The fusion peptide stretch occupies residues 489–510 (AAFGLGALFLGFLGAAGSTMGA). The segment at 552–570 (KQLQAKVLAIERYLRDQQI) is immunosuppression. The cysteines at positions 576 and 582 are disulfide-linked. Asn-589, Asn-594, Asn-595, Asn-604, and Asn-616 each carry an N-linked (GlcNAc...) asparagine; by host glycan. The stretch at 612 to 646 (EKVRNYSGVIFGLIEQAQEQQNTNEKSLLELDQWD) forms a coiled coil. Positions 641–662 (ELDQWDSLWSWFGITKWLWYIK) are MPER; binding to GalCer. The chain crosses the membrane as a helical span at residues 664 to 684 (AIMIVAGIVGIRIISIVITII). Residues 685-842 (ARVRQGYSPL…IRQGLERALI (158 aa)) are Cytoplasmic-facing. Residues 691-694 (YSPL) carry the YXXL motif; contains endocytosis signal motif.

This sequence belongs to the HIV-1 env protein family. The mature envelope protein (Env) consists of a homotrimer of non-covalently associated gp120-gp41 heterodimers. The resulting complex protrudes from the virus surface as a spike. There seems to be as few as 10 spikes on the average virion. Interacts with host CD4, CCR5 and CXCR4. Gp120 also interacts with the C-type lectins CD209/DC-SIGN and CLEC4M/DC-SIGNR (collectively referred to as DC-SIGN(R)). Gp120 and gp41 interact with GalCer. Gp120 interacts with host ITGA4/ITGB7 complex; on CD4+ T-cells, this interaction results in rapid activation of integrin ITGAL/LFA-1, which facilitates efficient cell-to-cell spreading of HIV-1. Gp120 interacts with cell-associated heparan sulfate; this interaction increases virus infectivity on permissive cells and may be involved in infection of CD4- cells. As to quaternary structure, the mature envelope protein (Env) consists of a homotrimer of non-covalently associated gp120-gp41 heterodimers. The resulting complex protrudes from the virus surface as a spike. There seems to be as few as 10 spikes on the average virion. Post-translationally, highly glycosylated by host. The high number of glycan on the protein is reffered to as 'glycan shield' because it contributes to hide protein sequence from adaptive immune system. Palmitoylation of the transmembrane protein and of Env polyprotein (prior to its proteolytic cleavage) is essential for their association with host cell membrane lipid rafts. Palmitoylation is therefore required for envelope trafficking to classical lipid rafts, but not for viral replication. In terms of processing, specific enzymatic cleavages in vivo yield mature proteins. Envelope glycoproteins are synthesized as an inactive precursor that is heavily N-glycosylated and processed likely by host cell furin in the Golgi to yield the mature SU and TM proteins. The cleavage site between SU and TM requires the minimal sequence [KR]-X-[KR]-R. About 2 of the 9 disulfide bonds of gp41 are reduced by P4HB/PDI, following binding to CD4 receptor.

It is found in the virion membrane. The protein resides in the host cell membrane. It localises to the host endosome membrane. Functionally, oligomerizes in the host endoplasmic reticulum into predominantly trimers. In a second time, gp160 transits in the host Golgi, where glycosylation is completed. The precursor is then proteolytically cleaved in the trans-Golgi and thereby activated by cellular furin or furin-like proteases to produce gp120 and gp41. Its function is as follows. Attaches the virus to the host lymphoid cell by binding to the primary receptor CD4. This interaction induces a structural rearrangement creating a high affinity binding site for a chemokine coreceptor like CXCR4 and/or CCR5. Acts as a ligand for CD209/DC-SIGN and CLEC4M/DC-SIGNR, which are respectively found on dendritic cells (DCs), and on endothelial cells of liver sinusoids and lymph node sinuses. These interactions allow capture of viral particles at mucosal surfaces by these cells and subsequent transmission to permissive cells. HIV subverts the migration properties of dendritic cells to gain access to CD4+ T-cells in lymph nodes. Virus transmission to permissive T-cells occurs either in trans (without DCs infection, through viral capture and transmission), or in cis (following DCs productive infection, through the usual CD4-gp120 interaction), thereby inducing a robust infection. In trans infection, bound virions remain infectious over days and it is proposed that they are not degraded, but protected in non-lysosomal acidic organelles within the DCs close to the cell membrane thus contributing to the viral infectious potential during DCs' migration from the periphery to the lymphoid tissues. On arrival at lymphoid tissues, intact virions recycle back to DCs' cell surface allowing virus transmission to CD4+ T-cells. Acts as a class I viral fusion protein. Under the current model, the protein has at least 3 conformational states: pre-fusion native state, pre-hairpin intermediate state, and post-fusion hairpin state. During fusion of viral and target intracellular membranes, the coiled coil regions (heptad repeats) assume a trimer-of-hairpins structure, positioning the fusion peptide in close proximity to the C-terminal region of the ectodomain. The formation of this structure appears to drive apposition and subsequent fusion of viral and target cell membranes. Complete fusion occurs in host cell endosomes and is dynamin-dependent, however some lipid transfer might occur at the plasma membrane. The virus undergoes clathrin-dependent internalization long before endosomal fusion, thus minimizing the surface exposure of conserved viral epitopes during fusion and reducing the efficacy of inhibitors targeting these epitopes. Membranes fusion leads to delivery of the nucleocapsid into the cytoplasm. The chain is Envelope glycoprotein gp160 from Human immunodeficiency virus type 1 group N (isolate YBF30) (HIV-1).